The sequence spans 572 residues: O-fucosyltransferase 16 (572 aa).

Residues 17 to 37 (LLPLVIAVSLSLLILFAFLSF) traverse the membrane as a helical; Signal-anchor for type II membrane protein segment. N-linked (GlcNAc...) asparagine glycosylation is found at Asn-92 and Asn-136. Substrate is bound at residue 274-276 (HLR). 2 N-linked (GlcNAc...) asparagine glycosylation sites follow: Asn-446 and Asn-506. A disordered region spans residues 498 to 572 (ESRKLGKKNK…EPELEAMLSD (75 aa)). A compositionally biased stretch (acidic residues) spans 521-541 (DQTEEDDPDWSEPDYEEEQSD). Asn-549 carries N-linked (GlcNAc...) asparagine glycosylation. Positions 554-566 (DYDDPSTSDEPEL) are enriched in acidic residues.

Belongs to the glycosyltransferase GT106 family.

The protein resides in the membrane. Its pathway is glycan metabolism. The sequence is that of O-fucosyltransferase 16 from Arabidopsis thaliana (Mouse-ear cress).